A 449-amino-acid polypeptide reads, in one-letter code: uncharacterized protein (449 aa).

The next 13 helical transmembrane spans lie at 1-21 (MVAN…ILLI), 26-46 (IHLT…HVIT), 51-71 (IDYI…MVLV), 97-117 (LLML…PNAT), 137-157 (FVPI…LTLV), 178-198 (FKLS…TPFL), 223-243 (VLMA…IGES), 244-264 (LPVP…ALLL), 285-305 (LIFF…GVTA), 310-330 (LLAV…VFTV), 340-360 (IPLV…IGFA), 377-397 (VLPL…GTLV), and 425-445 (GLPV…WLMF).

The protein belongs to the CitM (TC 2.A.11) transporter family.

Its subcellular location is the cell membrane. This is an uncharacterized protein from Synechocystis sp. (strain ATCC 27184 / PCC 6803 / Kazusa).